A 998-amino-acid chain; its full sequence is Mis18-binding protein 1 (998 aa).

Residue Lys7 forms a Glycyl lysine isopeptide (Lys-Gly) (interchain with G-Cter in SUMO2) linkage. Phosphoserine is present on residues Ser9, Ser109, and Ser134. The segment at 122–153 (QRDKQEQLTRSSSMLGSPQGEHTKDFPPNTDK) is disordered. Residues 142–153 (EHTKDFPPNTDK) show a composition bias toward basic and acidic residues. Residues Ser169 and Ser258 each carry the phosphoserine modification. The region spanning 336 to 422 (VHLQEWMIKV…MFGFPHNWKE (87 aa)) is the SANTA domain. 2 disordered regions span residues 438-460 (KTRQETARVQEKQKSKKKDAEDK) and 476-502 (DNSLERTEVPTDPLNSLEQPTSGKERR). Residues 488–497 (PLNSLEQPTS) are compositionally biased toward polar residues. A phosphothreonine mark is found at Thr516 and Thr578. 2 positions are modified to phosphoserine: Ser638 and Ser639. The tract at residues 638–660 (SSEENEVEIKSRTRARNTKERLN) is disordered. Positions 644–660 (VEIKSRTRARNTKERLN) are enriched in basic and acidic residues. Thr688 bears the Phosphothreonine mark. A Glycyl lysine isopeptide (Lys-Gly) (interchain with G-Cter in SUMO2) cross-link involves residue Lys707. Ser726 carries the phosphoserine modification. The SANT domain occupies 741–796 (TDDEEWSEQELQKLHCAFTSLPKHKPGFWSDVAMAVGSRTADECQKKYTEEPQGQG). Lys765 is covalently cross-linked (Glycyl lysine isopeptide (Lys-Gly) (interchain with G-Cter in SUMO2)). The interval 784 to 821 (CQKKYTEEPQGQGSRKHGSKKKQANKVQNGEKDSADAK) is disordered. A compositionally biased stretch (basic residues) spans 797 to 807 (SRKHGSKKKQA). Residues 812–821 (NGEKDSADAK) show a composition bias toward basic and acidic residues. Glycyl lysine isopeptide (Lys-Gly) (interchain with G-Cter in SUMO2) cross-links involve residues Lys821, Lys828, and Lys847. Residue Ser872 is modified to Phosphoserine. A Glycyl lysine isopeptide (Lys-Gly) (interchain with G-Cter in SUMO2) cross-link involves residue Lys948. Phosphoserine is present on residues Ser955 and Ser985. Residues 976-998 (SKYFIDDTESDEEEKDYYFSNSD) form a disordered region. The segment covering 981-990 (DDTESDEEEK) has biased composition (acidic residues).

As to quaternary structure, interacts with SP1. Interacts with MIS18A. Identified in a complex containing MIS18A, OIP5/MIS18B, MIS18BP1, RBBP7 and RBBP4. Interacts with KAT7/HBO1. Interacts (via N-terminus) with FLNA (via N-terminus).

Its subcellular location is the nucleus. The protein resides in the chromosome. It localises to the centromere. Functionally, required for recruitment of CENPA to centromeres and normal chromosome segregation during mitosis. The polypeptide is Mis18-binding protein 1 (Mis18bp1) (Mus musculus (Mouse)).